The following is a 372-amino-acid chain: MPMPDFQVSEPFTLGIELEMQVVNPPGYDLSQDSSTLIDAVKNQITAGEVKHDITESMLELATDVCRDINQAAGQFSAMQKVVLQAAADHHLEICGGGTHPFQKWQRQEVCDNERYQRTLENFGYLIQQATVFGQHVHVGCASGDDAIYLLHGLSRFVPHFIALSAASPYMQGTDTRFASSRPNIFSAFPDNGPMPWVSNWQQFETLFRCLSYTKMIDSIKDLHWDIRPSPHFGTVEVRVMDTPLTLSHAVNMAGLIQATAHWLLTERPFKHQEKDYLLYKFNRFQACRYGLEGVITDPHTGDRRPLTEDTLRLLEKIAPSADKIGASSAIEALHRQVVSGLNEAQLMRDFVADGGSLIGLVKKHCEIWAGE.

The protein belongs to the glutamate--cysteine ligase type 2 family. YbdK subfamily. Homodimer.

It catalyses the reaction L-cysteine + L-glutamate + ATP = gamma-L-glutamyl-L-cysteine + ADP + phosphate + H(+). ATP-dependent carboxylate-amine ligase which exhibits weak glutamate--cysteine ligase activity. In Escherichia fergusonii (strain ATCC 35469 / DSM 13698 / CCUG 18766 / IAM 14443 / JCM 21226 / LMG 7866 / NBRC 102419 / NCTC 12128 / CDC 0568-73), this protein is Putative glutamate--cysteine ligase 2 (ybdK).